We begin with the raw amino-acid sequence, 61 residues long: Small ribosomal subunit protein bS21 (61 aa).

The protein belongs to the bacterial ribosomal protein bS21 family.

The protein is Small ribosomal subunit protein bS21 of Methylacidiphilum infernorum (isolate V4) (Methylokorus infernorum (strain V4)).